The following is a 733-amino-acid chain: Protein PAT1 homolog 2 (733 aa).

Disordered stretches follow at residues Leu-42–Leu-75 and Leu-337–Tyr-366. Residues Glu-49–Lys-59 are compositionally biased toward basic and acidic residues. The span at Ser-346 to Arg-356 shows a compositional bias: low complexity.

The protein belongs to the PAT1 family. As to quaternary structure, interacts with ribonucleoprotein complex components. Interacts with cpeb. Oocyte-specific protein. Expressed throughout oogenesis but is not detectable in eggs, embryos, nor in adult tissues (at protein level).

The protein localises to the cytoplasm. It is found in the nucleus. RNA-binding protein that acts as a translational repressor. When overexpressed, able to disperse P-bodies. This Xenopus laevis (African clawed frog) protein is Protein PAT1 homolog 2 (patl2).